A 349-amino-acid chain; its full sequence is Acyl-CoA:acyl-CoA alkyltransferase (349 aa).

The active-site Proton acceptor is glutamate 97. The active-site Acyl-thioester intermediate is cysteine 123.

This sequence belongs to the thiolase-like superfamily. OleA family.

The enzyme catalyses a 1,2-saturated acyl-CoA + an acyl-CoA + H2O = an (R)-2-alkyl-3-oxoalkanoate + 2 CoA + H(+). In terms of biological role, involved in olefin biosynthesis. Catalyzes a non-decarboxylative head-to-head Claisen condensation of two acyl-CoA molecules, generating an (R)-2-alkyl-3-oxoalkanoate. The S.oneidensis oleABCD genes produce 3,6,9,12,15,19,22,25,28-hentriacontanonaene, which may aid the cells in adapting to a sudden drop in temperature. The sequence is that of Acyl-CoA:acyl-CoA alkyltransferase from Shewanella oneidensis (strain ATCC 700550 / JCM 31522 / CIP 106686 / LMG 19005 / NCIMB 14063 / MR-1).